The chain runs to 427 residues: UPF0229 protein YeaH (427 aa).

Over residues Asn-79–Arg-90 the composition is skewed to basic and acidic residues. The disordered stretch occupies residues Asn-79–Glu-110. The segment covering Gln-92–Gln-102 has biased composition (gly residues).

This sequence belongs to the UPF0229 family.

This Escherichia coli (strain K12 / MC4100 / BW2952) protein is UPF0229 protein YeaH.